A 178-amino-acid chain; its full sequence is Probable chorismate pyruvate-lyase (178 aa).

3 residues coordinate substrate: R72, L110, and E169.

This sequence belongs to the UbiC family.

Its subcellular location is the cytoplasm. It carries out the reaction chorismate = 4-hydroxybenzoate + pyruvate. It participates in cofactor biosynthesis; ubiquinone biosynthesis. Its function is as follows. Removes the pyruvyl group from chorismate, with concomitant aromatization of the ring, to provide 4-hydroxybenzoate (4HB) for the ubiquinone pathway. The sequence is that of Probable chorismate pyruvate-lyase from Nitrosomonas eutropha (strain DSM 101675 / C91 / Nm57).